The following is an 87-amino-acid chain: uncharacterized protein (87 aa).

The next 2 membrane-spanning stretches (helical) occupy residues 7–27 (LFFI…LYSI) and 64–84 (GINI…IPLF).

It localises to the membrane. This is an uncharacterized protein from Schizosaccharomyces pombe (strain 972 / ATCC 24843) (Fission yeast).